Consider the following 359-residue polypeptide: MVLRNPEKKGIASTLDERSGEIFRRIVETYLESGEPLGSRNLSRLLPMSLSPASVRNVMSDLEDLGLIYSPHVSAGRLPTQTGLRFFVDAFMQVGNLSAEERTSIERQVRRADRDQPIDSLLAEASQMLSGMSRGAGLVITTKSDPVLKHVEFIRLAPTKALAVLVGDHDQVENRIIELPAGITSAQLTEAANFVNAHLAGQTIPELRSQLEKVKETVRGELDALSQDLVERGLAIWSGSEGDEKPARLIVRGRANLLEGLEGTEDIERLRMLFDDLEKKDSLIELLDLAESGPGVRIFIGSENKLFSLSGSSLIVAPYRDSDDRIVGAVGVIGPTRLNYSRIVPMVDYTAQLMSRLSR.

Belongs to the HrcA family.

Its function is as follows. Negative regulator of class I heat shock genes (grpE-dnaK-dnaJ and groELS operons). Prevents heat-shock induction of these operons. In Sinorhizobium fredii (strain NBRC 101917 / NGR234), this protein is Heat-inducible transcription repressor HrcA.